Reading from the N-terminus, the 105-residue chain is MRKIKRDDEVIVIAGRDKGKRGKVVRVLAEDRLIVSGINMIKKHQKPNPQLGVAGGIVEKEAAIHASNVAIYNPATKKADRVGFKILENGNKVRVFKSNGEAVEA.

It belongs to the universal ribosomal protein uL24 family. As to quaternary structure, part of the 50S ribosomal subunit.

One of two assembly initiator proteins, it binds directly to the 5'-end of the 23S rRNA, where it nucleates assembly of the 50S subunit. Its function is as follows. One of the proteins that surrounds the polypeptide exit tunnel on the outside of the subunit. The chain is Large ribosomal subunit protein uL24 from Cellvibrio japonicus (strain Ueda107) (Pseudomonas fluorescens subsp. cellulosa).